We begin with the raw amino-acid sequence, 87 residues long: DNA-directed RNA polymerase subunit omega (87 aa).

Belongs to the RNA polymerase subunit omega family. As to quaternary structure, the RNAP catalytic core consists of 2 alpha, 1 beta, 1 beta' and 1 omega subunit. When a sigma factor is associated with the core the holoenzyme is formed, which can initiate transcription.

The catalysed reaction is RNA(n) + a ribonucleoside 5'-triphosphate = RNA(n+1) + diphosphate. Its function is as follows. Promotes RNA polymerase assembly. Latches the N- and C-terminal regions of the beta' subunit thereby facilitating its interaction with the beta and alpha subunits. The sequence is that of DNA-directed RNA polymerase subunit omega from Pseudomonas fluorescens (strain SBW25).